The following is a 414-amino-acid chain: Deoxyuridine 5'-triphosphate nucleotidohydrolase (414 aa).

Substrate is bound by residues 327–329 and 409–410; these read RSS and FG.

Belongs to the dUTPase family. Mg(2+) is required as a cofactor.

It carries out the reaction dUTP + H2O = dUMP + diphosphate + H(+). Its function is as follows. Involved in nucleotide metabolism: produces dUMP, the immediate precursor of thymidine nucleotides and decreases the intracellular concentration of dUTP to avoid uracil incorporation into viral DNA. The chain is Deoxyuridine 5'-triphosphate nucleotidohydrolase from Amazona oratrix (yellow-headed parrot).